Consider the following 503-residue polypeptide: Guanosine-5'-triphosphate,3'-diphosphate pyrophosphatase (503 aa).

This sequence belongs to the GppA/Ppx family. GppA subfamily.

The enzyme catalyses guanosine 3'-diphosphate 5'-triphosphate + H2O = guanosine 3',5'-bis(diphosphate) + phosphate + H(+). It functions in the pathway purine metabolism; ppGpp biosynthesis; ppGpp from GTP: step 2/2. Functionally, catalyzes the conversion of pppGpp to ppGpp. Guanosine pentaphosphate (pppGpp) is a cytoplasmic signaling molecule which together with ppGpp controls the 'stringent response', an adaptive process that allows bacteria to respond to amino acid starvation, resulting in the coordinated regulation of numerous cellular activities. This Pseudoalteromonas atlantica (strain T6c / ATCC BAA-1087) protein is Guanosine-5'-triphosphate,3'-diphosphate pyrophosphatase.